The chain runs to 119 residues: Ribonuclease P protein component (119 aa).

This sequence belongs to the RnpA family. In terms of assembly, consists of a catalytic RNA component (M1 or rnpB) and a protein subunit.

It catalyses the reaction Endonucleolytic cleavage of RNA, removing 5'-extranucleotides from tRNA precursor.. RNaseP catalyzes the removal of the 5'-leader sequence from pre-tRNA to produce the mature 5'-terminus. It can also cleave other RNA substrates such as 4.5S RNA. The protein component plays an auxiliary but essential role in vivo by binding to the 5'-leader sequence and broadening the substrate specificity of the ribozyme. The polypeptide is Ribonuclease P protein component (Streptococcus pyogenes serotype M5 (strain Manfredo)).